The chain runs to 190 residues: MDTLKDKIRSEGIVLSEHVLKVDAFLNHQIDPQLMQQVGHAFATRFRDQGITKIVTIEASGIAPAVMAGLELGVPVIFARKYQSLTLKDNLYISKVFSFTKQTESTIAISAKHLNAHDHVLVIDDFLANGHAAKALIDLIGQAGASIAGLGIVIEKSFQDGRALLESEGYRVESLARVKSLAGGQVEFLD.

2 residues coordinate xanthine: L20 and N27. 128–132 (ANGHA) is a 5-phospho-alpha-D-ribose 1-diphosphate binding site. K156 is a xanthine binding site.

Belongs to the purine/pyrimidine phosphoribosyltransferase family. Xpt subfamily. In terms of assembly, homodimer.

It localises to the cytoplasm. It carries out the reaction XMP + diphosphate = xanthine + 5-phospho-alpha-D-ribose 1-diphosphate. It functions in the pathway purine metabolism; XMP biosynthesis via salvage pathway; XMP from xanthine: step 1/1. Its function is as follows. Converts the preformed base xanthine, a product of nucleic acid breakdown, to xanthosine 5'-monophosphate (XMP), so it can be reused for RNA or DNA synthesis. The polypeptide is Xanthine phosphoribosyltransferase (Pseudomonas paraeruginosa (strain DSM 24068 / PA7) (Pseudomonas aeruginosa (strain PA7))).